Reading from the N-terminus, the 172-residue chain is Peptidyl-prolyl cis-trans isomerase CYP18-4 (172 aa).

Residues 7-170 (FFDMSLSGTP…KVVTITDCGQ (164 aa)) enclose the PPIase cyclophilin-type domain.

Belongs to the cyclophilin-type PPIase family. As to quaternary structure, interacts with A.tumefaciens VirD2. In terms of tissue distribution, ubiquitous, with higher levels in roots and flowers. Confined to vascular tissues. Also detected in stigmas, base of siliques and anthers.

It localises to the cytoplasm. It catalyses the reaction [protein]-peptidylproline (omega=180) = [protein]-peptidylproline (omega=0). With respect to regulation, binds cyclosporin A (CsA). CsA mediates some of its effects via an inhibitory action on PPIase. PPIases accelerate the folding of proteins. It catalyzes the cis-trans isomerization of proline imidic peptide bonds in oligopeptides. The chain is Peptidyl-prolyl cis-trans isomerase CYP18-4 (CYP18-4) from Arabidopsis thaliana (Mouse-ear cress).